Reading from the N-terminus, the 158-residue chain is Ribosome maturation factor RimP (158 aa).

It belongs to the RimP family.

It is found in the cytoplasm. Its function is as follows. Required for maturation of 30S ribosomal subunits. This Streptococcus suis (strain 05ZYH33) protein is Ribosome maturation factor RimP.